A 134-amino-acid chain; its full sequence is Phosphoribosyl-AMP cyclohydrolase (134 aa).

Aspartate 80 contributes to the Mg(2+) binding site. Cysteine 81 provides a ligand contact to Zn(2+). Mg(2+)-binding residues include aspartate 82 and aspartate 84. Residues cysteine 98 and cysteine 105 each contribute to the Zn(2+) site.

It belongs to the PRA-CH family. In terms of assembly, homodimer. It depends on Mg(2+) as a cofactor. Zn(2+) is required as a cofactor.

Its subcellular location is the cytoplasm. It catalyses the reaction 1-(5-phospho-beta-D-ribosyl)-5'-AMP + H2O = 1-(5-phospho-beta-D-ribosyl)-5-[(5-phospho-beta-D-ribosylamino)methylideneamino]imidazole-4-carboxamide. It functions in the pathway amino-acid biosynthesis; L-histidine biosynthesis; L-histidine from 5-phospho-alpha-D-ribose 1-diphosphate: step 3/9. Its function is as follows. Catalyzes the hydrolysis of the adenine ring of phosphoribosyl-AMP. The chain is Phosphoribosyl-AMP cyclohydrolase from Bordetella pertussis (strain Tohama I / ATCC BAA-589 / NCTC 13251).